We begin with the raw amino-acid sequence, 285 residues long: Nucleotide-binding protein CD630_34000 (285 aa).

ATP is bound at residue 8–15 (GLSGSGKS). A GTP-binding site is contributed by 59-62 (DIRG).

Belongs to the RapZ-like family.

In terms of biological role, displays ATPase and GTPase activities. The chain is Nucleotide-binding protein CD630_34000 from Clostridioides difficile (strain 630) (Peptoclostridium difficile).